We begin with the raw amino-acid sequence, 189 residues long: Molybdopterin synthase catalytic subunit (189 aa).

The span at 1 to 30 shows a compositional bias: polar residues; it reads MSSLEISNSCFSPETRSPSSRQSVEDNASE. Residues 1-41 form a disordered region; the sequence is MSSLEISNSCFSPETRSPSSRQSVEDNASEPSGKDVDDVQE. S20 is modified (phosphoserine). A compositionally biased stretch (basic and acidic residues) spans 32 to 41; it reads SGKDVDDVQE. Substrate is bound by residues 143–144, K159, and 166–168; these read HR and KKE.

It belongs to the MoaE family. MOCS2B subfamily. In terms of assembly, heterotetramer; composed of 2 small (MOCS2A) and 2 large (MOCS2B) subunits.

The protein resides in the cytoplasm. Its subcellular location is the cytosol. The enzyme catalyses 2 [molybdopterin-synthase sulfur-carrier protein]-C-terminal-Gly-aminoethanethioate + cyclic pyranopterin phosphate + H2O = molybdopterin + 2 [molybdopterin-synthase sulfur-carrier protein]-C-terminal Gly-Gly + 2 H(+). Its pathway is cofactor biosynthesis; molybdopterin biosynthesis. Its function is as follows. Catalytic subunit of the molybdopterin synthase complex, a complex that catalyzes the conversion of precursor Z into molybdopterin. Acts by mediating the incorporation of 2 sulfur atoms from thiocarboxylated MOCS2A into precursor Z to generate a dithiolene group. The sequence is that of Molybdopterin synthase catalytic subunit from Mus musculus (Mouse).